The primary structure comprises 147 residues: uncharacterized protein (147 aa).

Residues 29 to 147 (PYGNNSVHQG…GHHHGHHHKH (119 aa)) form a disordered region. Polar residues-rich tracts occupy residues 34–45 (SVHQGQPHTDQN) and 60–73 (PQAQYGNAGQNQPS). Residues 75–92 (PFGGAGYTGPTAGTGFGN) show a composition bias toward gly residues. Residues 122–147 (DGHHKKHGRKEHDHHHGHHHGHHHKH) are compositionally biased toward basic residues.

This is an uncharacterized protein from Caenorhabditis elegans.